Here is a 223-residue protein sequence, read N- to C-terminus: 2-phospho-L-lactate guanylyltransferase (223 aa).

It belongs to the CofC family. Homodimer.

It carries out the reaction (2S)-2-phospholactate + GTP + H(+) = (2S)-lactyl-2-diphospho-5'-guanosine + diphosphate. The protein operates within cofactor biosynthesis; coenzyme F420 biosynthesis. Guanylyltransferase that catalyzes the activation of (2S)-2-phospholactate (2-PL) as (2S)-lactyl-2-diphospho-5'-guanosine, via the condensation of 2-PL with GTP. It is involved in the biosynthesis of coenzyme F420, a hydride carrier cofactor. This chain is 2-phospho-L-lactate guanylyltransferase, found in Methanothermobacter thermautotrophicus (strain ATCC 29096 / DSM 1053 / JCM 10044 / NBRC 100330 / Delta H) (Methanobacterium thermoautotrophicum).